The primary structure comprises 188 residues: Elongation factor P (188 aa).

The protein belongs to the elongation factor P family.

The protein localises to the cytoplasm. Its pathway is protein biosynthesis; polypeptide chain elongation. Functionally, involved in peptide bond synthesis. Stimulates efficient translation and peptide-bond synthesis on native or reconstituted 70S ribosomes in vitro. Probably functions indirectly by altering the affinity of the ribosome for aminoacyl-tRNA, thus increasing their reactivity as acceptors for peptidyl transferase. The protein is Elongation factor P of Chlorobium chlorochromatii (strain CaD3).